We begin with the raw amino-acid sequence, 107 residues long: Heme-degrading monooxygenase (107 aa).

Residues 2–94 enclose the ABM domain; that stretch reads IIVTNTAKIT…YILDNKISYY (93 aa). Position 6 (Asn6) interacts with Fe cation. His76 is a binding site for heme.

This sequence belongs to the antibiotic biosynthesis monooxygenase family. Heme-degrading monooxygenase IsdG subfamily. As to quaternary structure, homodimer.

It is found in the cytoplasm. It catalyses the reaction heme b + 3 reduced [NADPH--hemoprotein reductase] + 3 O2 = biliverdin IXalpha + CO + Fe(2+) + 3 oxidized [NADPH--hemoprotein reductase] + 3 H2O + H(+). Its function is as follows. Allows bacterial pathogens to use the host heme as an iron source. Catalyzes the oxidative degradation of the heme macrocyclic porphyrin ring to the biliverdin in the presence of a suitable electron donor such as ascorbate or NADPH--cytochrome P450 reductase, with subsequent release of free iron. The protein is Heme-degrading monooxygenase of Bacillus cereus (strain AH187).